A 22-amino-acid polypeptide reads, in one-letter code: GLWEKIKEKANELVSGIVEGVK.

Lys-22 carries the lysine amide modification.

Expressed by the skin parotoid and/or rostral glands.

It localises to the secreted. In terms of biological role, antibacterial peptide, that adopts an alpha helical conformation which can disrupt bacterial membranes. Each caerin displays a different antimicrobial specificity. The polypeptide is Caerin-3.3 (Ranoidea caerulea (Green tree frog)).